The sequence spans 455 residues: Kynurenine 3-monooxygenase (455 aa).

Belongs to the aromatic-ring hydroxylase family. KMO subfamily. FAD serves as cofactor.

It carries out the reaction L-kynurenine + NADPH + O2 + H(+) = 3-hydroxy-L-kynurenine + NADP(+) + H2O. It functions in the pathway cofactor biosynthesis; NAD(+) biosynthesis; quinolinate from L-kynurenine: step 1/3. Functionally, catalyzes the hydroxylation of L-kynurenine (L-Kyn) to form 3-hydroxy-L-kynurenine (L-3OHKyn). Required for synthesis of quinolinic acid. This Xanthomonas oryzae pv. oryzae (strain MAFF 311018) protein is Kynurenine 3-monooxygenase.